The sequence spans 658 residues: Carnitine O-palmitoyltransferase 2, mitochondrial (658 aa).

The N-terminal 25 residues, 1 to 25 (MVARLLLRSWSRGLAVGPGAPCRPL), are a transit peptide targeting the mitochondrion. The Mitochondrial matrix portion of the chain corresponds to 26-178 (STGFEPSQYL…DLLEPEVFHL (153 aa)). Lys-69 carries the N6-succinyllysine modification. Lys-79 carries the N6-acetyllysine modification. The residue at position 85 (Lys-85) is an N6-succinyllysine. The note=Mitochondrial inner membrane intramembrane region spans 179 to 208 (NPAKSDTDTFKRFIRFVPSFLSWYGAYLVN). Topologically, residues 209–658 (AYPLDMSQYY…DALEGKMIKT (450 aa)) are mitochondrial matrix. Lys-239 carries the post-translational modification N6-acetyllysine; alternate. Lys-239 carries the post-translational modification N6-succinyllysine; alternate. His-372 functions as the Proton acceptor in the catalytic mechanism. N6-acetyllysine; alternate is present on Lys-418. Lys-418 carries the post-translational modification N6-succinyllysine; alternate. An N6-succinyllysine mark is found at Lys-424 and Lys-439. 452–464 (GREFLKKQKLSPD) lines the CoA pocket. Residues Tyr-486, Ser-488, and Thr-499 each contribute to the (R)-carnitine site. Position 510 is an N6-acetyllysine; alternate (Lys-510). Position 510 is an N6-succinyllysine; alternate (Lys-510).

Belongs to the carnitine/choline acetyltransferase family.

The protein localises to the mitochondrion inner membrane. It carries out the reaction (R)-carnitine + hexadecanoyl-CoA = O-hexadecanoyl-(R)-carnitine + CoA. The enzyme catalyses octanoyl-CoA + (R)-carnitine = O-octanoyl-(R)-carnitine + CoA. It catalyses the reaction decanoyl-CoA + (R)-carnitine = O-decanoyl-(R)-carnitine + CoA. The catalysed reaction is dodecanoyl-CoA + (R)-carnitine = O-dodecanoyl-R-carnitine + CoA. It carries out the reaction tetradecanoyl-CoA + (R)-carnitine = O-tetradecanoyl-(R)-carnitine + CoA. The enzyme catalyses (R)-carnitine + octadecanoyl-CoA = O-octadecanoyl-(R)-carnitine + CoA. It catalyses the reaction eicosanoyl-CoA + (R)-carnitine = O-eicosanoyl-(R)-carnitine + CoA. The catalysed reaction is (9Z)-tetradecenoyl-CoA + (R)-carnitine = O-(9Z)-tetradecenoyl-(R)-carnitine + CoA. It carries out the reaction (5Z)-tetradecenoyl-CoA + (R)-carnitine = O-(5Z)-tetradecenoyl-(R)-carnitine + CoA. The enzyme catalyses (R)-carnitine + (9Z)-octadecenoyl-CoA = O-(9Z)-octadecenoyl-(R)-carnitine + CoA. It catalyses the reaction 4,8-dimethylnonanoyl-CoA + (R)-carnitine = O-4,8-dimethylnonanoyl-(R)-carnitine + CoA. The protein operates within lipid metabolism; fatty acid beta-oxidation. In terms of biological role, involved in the intramitochondrial synthesis of acylcarnitines from accumulated acyl-CoA metabolites. Reconverts acylcarnitines back into the respective acyl-CoA esters that can then undergo beta-oxidation, an essential step for the mitochondrial uptake of long-chain fatty acids and their subsequent beta-oxidation in the mitochondrion. Active with medium (C8-C12) and long-chain (C14-C18) acyl-CoA esters. The protein is Carnitine O-palmitoyltransferase 2, mitochondrial (CPT2) of Bos taurus (Bovine).